The chain runs to 251 residues: Hydroxyacylglutathione hydrolase (251 aa).

The Zn(2+) site is built by H53, H55, D57, H58, H110, D127, and H165.

This sequence belongs to the metallo-beta-lactamase superfamily. Glyoxalase II family. In terms of assembly, monomer. The cofactor is Zn(2+).

The catalysed reaction is an S-(2-hydroxyacyl)glutathione + H2O = a 2-hydroxy carboxylate + glutathione + H(+). It participates in secondary metabolite metabolism; methylglyoxal degradation; (R)-lactate from methylglyoxal: step 2/2. Thiolesterase that catalyzes the hydrolysis of S-D-lactoyl-glutathione to form glutathione and D-lactic acid. This Klebsiella pneumoniae subsp. pneumoniae (strain ATCC 700721 / MGH 78578) protein is Hydroxyacylglutathione hydrolase.